A 181-amino-acid chain; its full sequence is Shikimate kinase (181 aa).

17–22 (GAGKTT) serves as a coordination point for ATP. Threonine 21 serves as a coordination point for Mg(2+). Substrate is bound by residues aspartate 39, arginine 63, and glycine 85. Arginine 122 serves as a coordination point for ATP. A substrate-binding site is contributed by arginine 141.

It belongs to the shikimate kinase family. Monomer. Requires Mg(2+) as cofactor.

Its subcellular location is the cytoplasm. It carries out the reaction shikimate + ATP = 3-phosphoshikimate + ADP + H(+). The protein operates within metabolic intermediate biosynthesis; chorismate biosynthesis; chorismate from D-erythrose 4-phosphate and phosphoenolpyruvate: step 5/7. Its function is as follows. Catalyzes the specific phosphorylation of the 3-hydroxyl group of shikimic acid using ATP as a cosubstrate. This is Shikimate kinase from Trichormus variabilis (strain ATCC 29413 / PCC 7937) (Anabaena variabilis).